The sequence spans 314 residues: MSRPRRRGRDIHGVLLLDKPQGMSSNDVLQKVKRIYNANRAGHTGALDPLATGMLPICLGEATKFSQYLLDSDKRYRVIARLGQRTDTSDADGQIVQERPVTFSAEQLASALETFRGDIEQIPSMYSALKYQGKKLYEYARQGIEVPREARPITVYELLFIRHEGNELELEVHCSKGTYIRTIIDDLGEKLGCGAHVTYLRRLTVSKYPVDRMVTLEHLQTLVAQAEQQGVPAAQWLDPLLMPMDSPASDYPVVNLPLTSSVYFKNGNPVRTTGAPLKGLVRVTEGEDDKFIGMGEIDDEGRVAPRRLVVEYPA.

Histidine 43 provides a ligand contact to substrate. Residue aspartate 48 is the Nucleophile of the active site. Substrate contacts are provided by tyrosine 76, tyrosine 179, and leucine 200.

It belongs to the pseudouridine synthase TruB family. Type 1 subfamily.

It catalyses the reaction uridine(55) in tRNA = pseudouridine(55) in tRNA. In terms of biological role, responsible for synthesis of pseudouridine from uracil-55 in the psi GC loop of transfer RNAs. This is tRNA pseudouridine synthase B from Salmonella paratyphi A (strain ATCC 9150 / SARB42).